Reading from the N-terminus, the 284-residue chain is UPF0294 protein VV2535 (284 aa).

It belongs to the UPF0294 family.

Its subcellular location is the cytoplasm. The chain is UPF0294 protein VV2535 from Vibrio vulnificus (strain YJ016).